Consider the following 72-residue polypeptide: Translation initiation factor IF-1 (72 aa).

Residues 2–72 (AKDDVIEVEG…TRGRITYRYK (71 aa)) enclose the S1-like domain. Position 60 is a phosphotyrosine (Tyr60).

The protein belongs to the IF-1 family. As to quaternary structure, component of the 30S ribosomal translation pre-initiation complex which assembles on the 30S ribosome in the order IF-2 and IF-3, IF-1 and N-formylmethionyl-tRNA(fMet); mRNA recruitment can occur at any time during PIC assembly.

The protein localises to the cytoplasm. One of the essential components for the initiation of protein synthesis. Stabilizes the binding of IF-2 and IF-3 on the 30S subunit to which N-formylmethionyl-tRNA(fMet) subsequently binds. Helps modulate mRNA selection, yielding the 30S pre-initiation complex (PIC). Upon addition of the 50S ribosomal subunit IF-1, IF-2 and IF-3 are released leaving the mature 70S translation initiation complex. This Bacillus subtilis (strain 168) protein is Translation initiation factor IF-1.